Here is a 61-residue protein sequence, read N- to C-terminus: Phospholipase A2 (61 aa).

Ca(2+) contacts are provided by Tyr27, Gly29, and Gly31. Cys28 and Cys35 form a disulfide bridge. Residue His38 is part of the active site. Residue Asp39 coordinates Ca(2+). Cysteines 41 and 59 form a disulfide. Residue Asp60 is part of the active site.

Belongs to the phospholipase A2 family. Group II subfamily. D49 sub-subfamily. As to quaternary structure, homodimer. Requires Ca(2+) as cofactor. As to expression, expressed by the venom gland.

The protein resides in the secreted. The catalysed reaction is a 1,2-diacyl-sn-glycero-3-phosphocholine + H2O = a 1-acyl-sn-glycero-3-phosphocholine + a fatty acid + H(+). Snake venom phospholipase A2 (PLA2) that displays edema-inducing activities. PLA2 catalyzes the calcium-dependent hydrolysis of the 2-acyl groups in 3-sn-phosphoglycerides. This is Phospholipase A2 from Crotalus atrox (Western diamondback rattlesnake).